We begin with the raw amino-acid sequence, 343 residues long: Anthranilate phosphoribosyltransferase (343 aa).

Residues Gly85, 88-89 (GD), Thr93, 95-98 (NIST), 113-121 (KHGGRSVSS), and Ala125 each bind 5-phospho-alpha-D-ribose 1-diphosphate. Position 85 (Gly85) interacts with anthranilate. Ser97 contributes to the Mg(2+) binding site. Residue Arg171 coordinates anthranilate. Mg(2+) is bound by residues Asp230 and Glu231.

Belongs to the anthranilate phosphoribosyltransferase family. In terms of assembly, homodimer. Requires Mg(2+) as cofactor.

It catalyses the reaction N-(5-phospho-beta-D-ribosyl)anthranilate + diphosphate = 5-phospho-alpha-D-ribose 1-diphosphate + anthranilate. The protein operates within amino-acid biosynthesis; L-tryptophan biosynthesis; L-tryptophan from chorismate: step 2/5. Catalyzes the transfer of the phosphoribosyl group of 5-phosphorylribose-1-pyrophosphate (PRPP) to anthranilate to yield N-(5'-phosphoribosyl)-anthranilate (PRA). The sequence is that of Anthranilate phosphoribosyltransferase from Aromatoleum aromaticum (strain DSM 19018 / LMG 30748 / EbN1) (Azoarcus sp. (strain EbN1)).